A 639-amino-acid polypeptide reads, in one-letter code: Threonine--tRNA ligase (639 aa).

A TGS domain is found at 1 to 61 (MATVRLPDGK…DGGGELEFVT (61 aa)). The interval 239–536 (DHRRLGRELG…LIEHYAGAFP (298 aa)) is catalytic. Zn(2+) is bound by residues C333, H384, and H513.

It belongs to the class-II aminoacyl-tRNA synthetase family. In terms of assembly, homodimer. Requires Zn(2+) as cofactor.

It is found in the cytoplasm. The enzyme catalyses tRNA(Thr) + L-threonine + ATP = L-threonyl-tRNA(Thr) + AMP + diphosphate + H(+). Its function is as follows. Catalyzes the attachment of threonine to tRNA(Thr) in a two-step reaction: L-threonine is first activated by ATP to form Thr-AMP and then transferred to the acceptor end of tRNA(Thr). Also edits incorrectly charged L-seryl-tRNA(Thr). This Rubrobacter xylanophilus (strain DSM 9941 / JCM 11954 / NBRC 16129 / PRD-1) protein is Threonine--tRNA ligase.